Consider the following 1201-residue polypeptide: Vitamin B12-dependent ribonucleotide reductase (1201 aa).

Substrate is bound by residues Ser153, 198–199 (AC), Gly230, 482–486 (NPCSE), and 683–687 (PTGTI). Cys199 and Cys495 are disulfide-bonded. Asn482 (proton acceptor) is an active-site residue. Residue Cys484 is the Cysteine radical intermediate of the active site. The active-site Proton acceptor is the Glu486. Positions 1100 to 1118 (DEIGSKRATAESNGQEKET) are enriched in basic and acidic residues. A disordered region spans residues 1100–1120 (DEIGSKRATAESNGQEKETLS).

This sequence belongs to the ribonucleoside diphosphate reductase class-2 family. Adenosylcob(III)alamin serves as cofactor.

The enzyme catalyses a 2'-deoxyribonucleoside 5'-diphosphate + [thioredoxin]-disulfide + H2O = a ribonucleoside 5'-diphosphate + [thioredoxin]-dithiol. Catalyzes the reduction of ribonucleotides to deoxyribonucleotides. May function to provide a pool of deoxyribonucleotide precursors for DNA repair during oxygen limitation and/or for immediate growth after restoration of oxygen. The protein is Vitamin B12-dependent ribonucleotide reductase (nrdJ) of Leptospira interrogans serogroup Icterohaemorrhagiae serovar copenhageni (strain Fiocruz L1-130).